Reading from the N-terminus, the 255-residue chain is 5-oxoprolinase subunit A (255 aa).

It belongs to the LamB/PxpA family. Forms a complex composed of PxpA, PxpB and PxpC.

It catalyses the reaction 5-oxo-L-proline + ATP + 2 H2O = L-glutamate + ADP + phosphate + H(+). In terms of biological role, catalyzes the cleavage of 5-oxoproline to form L-glutamate coupled to the hydrolysis of ATP to ADP and inorganic phosphate. The chain is 5-oxoprolinase subunit A from Clostridium beijerinckii (strain ATCC 51743 / NCIMB 8052) (Clostridium acetobutylicum).